A 312-amino-acid chain; its full sequence is Type II methyltransferase M.NgoMIV (312 aa).

One can recognise an SAM-dependent MTase C5-type domain in the interval 3–311 (FTSLEICAGA…RQIIKALKKE (309 aa)). Residue C74 is part of the active site.

The protein belongs to the class I-like SAM-binding methyltransferase superfamily. C5-methyltransferase family.

The catalysed reaction is a 2'-deoxycytidine in DNA + S-adenosyl-L-methionine = a 5-methyl-2'-deoxycytidine in DNA + S-adenosyl-L-homocysteine + H(+). In terms of biological role, a methylase, recognizes the double-stranded sequence 5'-GCCGGC-3', methylates C-2 on both strands, and protects the DNA from cleavage by the NgoMIV endonuclease. The protein is Type II methyltransferase M.NgoMIV (ngoMIVM) of Neisseria gonorrhoeae.